The primary structure comprises 888 residues: Alanine--tRNA ligase (888 aa).

Residues histidine 564, histidine 568, cysteine 676, and histidine 680 each contribute to the Zn(2+) site.

The protein belongs to the class-II aminoacyl-tRNA synthetase family. It depends on Zn(2+) as a cofactor.

It localises to the cytoplasm. It catalyses the reaction tRNA(Ala) + L-alanine + ATP = L-alanyl-tRNA(Ala) + AMP + diphosphate. Catalyzes the attachment of alanine to tRNA(Ala) in a two-step reaction: alanine is first activated by ATP to form Ala-AMP and then transferred to the acceptor end of tRNA(Ala). Also edits incorrectly charged Ser-tRNA(Ala) and Gly-tRNA(Ala) via its editing domain. In Mesorhizobium japonicum (strain LMG 29417 / CECT 9101 / MAFF 303099) (Mesorhizobium loti (strain MAFF 303099)), this protein is Alanine--tRNA ligase.